Here is a 25-residue protein sequence, read N- to C-terminus: Small ribosomal subunit protein eS32 (25 aa).

The segment at 1–25 (MREKWKKKRSRRLRRKRRKMRARSK) is disordered.

Belongs to the eukaryotic ribosomal protein eS32 family. As to quaternary structure, component of the large ribosomal subunit.

The chain is Small ribosomal subunit protein eS32 (rpl41) from Agaricus bisporus (White button mushroom).